Consider the following 446-residue polypeptide: C4-dicarboxylate transport protein (446 aa).

The next 9 membrane-spanning stretches (helical) occupy residues Val25 to Gly45, Leu58 to Ile78, Phe93 to Val113, Ala159 to Leu179, Val199 to Met219, Leu236 to Val256, Ile322 to Gly342, Ala370 to Ile390, and Leu400 to Leu420.

Belongs to the dicarboxylate/amino acid:cation symporter (DAACS) (TC 2.A.23) family.

The protein localises to the cell inner membrane. In terms of biological role, responsible for the transport of dicarboxylates such as succinate, fumarate, and malate from the periplasm across the membrane. This Sphingopyxis alaskensis (strain DSM 13593 / LMG 18877 / RB2256) (Sphingomonas alaskensis) protein is C4-dicarboxylate transport protein.